The chain runs to 127 residues: MAKITRKRRVKKNIESGIVHIQSTFNNTIVMITDVHGNALAWSSAGALGFKGSKKSTPFAAQMASEAAAKAAQEQGLKTVSVTVKGPGSGRESAIRALAAAGLNVTSISDVTPVPHNGARPPKRRRV.

This sequence belongs to the universal ribosomal protein uS11 family. In terms of assembly, part of the 30S ribosomal subunit. Interacts with proteins S7 and S18. Binds to IF-3.

In terms of biological role, located on the platform of the 30S subunit, it bridges several disparate RNA helices of the 16S rRNA. Forms part of the Shine-Dalgarno cleft in the 70S ribosome. The polypeptide is Small ribosomal subunit protein uS11 (Lactococcus lactis subsp. lactis (strain IL1403) (Streptococcus lactis)).